Reading from the N-terminus, the 548-residue chain is MANEVISGEQLQKVIRDAADLVVSSAGVTLGPEGRPVIMSKSYGGPEVTKDGYKVINNLKPEDEKIAKIVELLNQATSQANEKAGDGTTTATILVGNMIKNAHKHIAAQRSRTKLKSGMKRARDEVVKYIQSVAKKINSEEEIAQVGSISANGNSEIGNKIAEAMNKVGKEGVITVEEGKGLDEFSVSVVQGMVFDRGYVSPYFITNPEKMIVEFDNPYVLLANKKLSSIQPMVPLLETIVRSNRAVVIIAEDVEGEALTSLVLSKMRGSLKACAVKAPGFGDRRSEMLEDIRILTGAKTLVSDDLGVTVESLTVEDLGTAKSIIISKDSTTIVDGGGEKTSIDARVKQIKTQIDKTTSDYDKEKLQERLAKLAGGVAVLKVGGATEVEVKERKDRVEDALHATRAAVEEGIVPGGGATLLSAIAVLEKLSSDDDDEQAGINIVKSALKAPISQIVENAGEDASVITYNLLESKDPNRIFDARELKYVDAFKAGIIDPAKVVRVALESAVSVASVLVTTEALIVDLPTKDNGSPSMMPGGGMGGMGGF.

ATP contacts are provided by residues 29-32, Lys50, 86-90, Gly416, and Asp497; these read TLGP and DGTTT.

This sequence belongs to the chaperonin (HSP60) family. Forms a cylinder of 14 subunits composed of two heptameric rings stacked back-to-back. Interacts with the co-chaperonin GroES.

The protein localises to the cytoplasm. It catalyses the reaction ATP + H2O + a folded polypeptide = ADP + phosphate + an unfolded polypeptide.. Functionally, together with its co-chaperonin GroES, plays an essential role in assisting protein folding. The GroEL-GroES system forms a nano-cage that allows encapsulation of the non-native substrate proteins and provides a physical environment optimized to promote and accelerate protein folding. This chain is Chaperonin GroEL, found in Neorickettsia risticii (Ehrlichia risticii).